We begin with the raw amino-acid sequence, 399 residues long: Tyrosine--tRNA ligase 2 (399 aa).

A 'HIGH' region motif is present at residues 43–52 (PTAPDLHLGH). A 'KMSKS' region motif is present at residues 227–231 (KMSKS). Position 230 (K230) interacts with ATP. Residues 338–398 (ITLLDLCSVA…IGKRYKFRIG (61 aa)) enclose the S4 RNA-binding domain.

This sequence belongs to the class-I aminoacyl-tRNA synthetase family. TyrS type 2 subfamily. Homodimer.

It is found in the cytoplasm. The enzyme catalyses tRNA(Tyr) + L-tyrosine + ATP = L-tyrosyl-tRNA(Tyr) + AMP + diphosphate + H(+). Functionally, catalyzes the attachment of tyrosine to tRNA(Tyr) in a two-step reaction: tyrosine is first activated by ATP to form Tyr-AMP and then transferred to the acceptor end of tRNA(Tyr). The protein is Tyrosine--tRNA ligase 2 of Photorhabdus laumondii subsp. laumondii (strain DSM 15139 / CIP 105565 / TT01) (Photorhabdus luminescens subsp. laumondii).